Consider the following 418-residue polypeptide: UDP-N-acetylglucosamine 1-carboxyvinyltransferase (418 aa).

Phosphoenolpyruvate is bound at residue Lys-22–Asn-23. Arg-91 serves as a coordination point for UDP-N-acetyl-alpha-D-glucosamine. The Proton donor role is filled by Cys-115. Residue Cys-115 is modified to 2-(S-cysteinyl)pyruvic acid O-phosphothioketal. UDP-N-acetyl-alpha-D-glucosamine contacts are provided by residues Arg-120–Leu-124, Asp-305, and Ile-327.

This sequence belongs to the EPSP synthase family. MurA subfamily.

The protein localises to the cytoplasm. The enzyme catalyses phosphoenolpyruvate + UDP-N-acetyl-alpha-D-glucosamine = UDP-N-acetyl-3-O-(1-carboxyvinyl)-alpha-D-glucosamine + phosphate. It participates in cell wall biogenesis; peptidoglycan biosynthesis. In terms of biological role, cell wall formation. Adds enolpyruvyl to UDP-N-acetylglucosamine. The sequence is that of UDP-N-acetylglucosamine 1-carboxyvinyltransferase from Wigglesworthia glossinidia brevipalpis.